Here is a 622-residue protein sequence, read N- to C-terminus: 1-deoxy-D-xylulose-5-phosphate synthase (622 aa).

Thiamine diphosphate-binding positions include H80 and 121-123 (GHS). D152 lines the Mg(2+) pocket. Thiamine diphosphate-binding positions include 153–154 (GA), N181, Y288, and E370. N181 is a binding site for Mg(2+).

Belongs to the transketolase family. DXPS subfamily. As to quaternary structure, homodimer. Requires Mg(2+) as cofactor. Thiamine diphosphate serves as cofactor.

The enzyme catalyses D-glyceraldehyde 3-phosphate + pyruvate + H(+) = 1-deoxy-D-xylulose 5-phosphate + CO2. It functions in the pathway metabolic intermediate biosynthesis; 1-deoxy-D-xylulose 5-phosphate biosynthesis; 1-deoxy-D-xylulose 5-phosphate from D-glyceraldehyde 3-phosphate and pyruvate: step 1/1. Functionally, catalyzes the acyloin condensation reaction between C atoms 2 and 3 of pyruvate and glyceraldehyde 3-phosphate to yield 1-deoxy-D-xylulose-5-phosphate (DXP). The sequence is that of 1-deoxy-D-xylulose-5-phosphate synthase from Shewanella baltica (strain OS185).